Consider the following 50-residue polypeptide: MNFYSLFVFIALIFSFNVVHGHRCHRGGNGGYGGGSGEVVVIGAEKPKDK.

The N-terminal stretch at 1 to 21 (MNFYSLFVFIALIFSFNVVHG) is a signal peptide.

Its function is as follows. May have role in hypoxia response. This is Fungus-induced-related protein 15 (fipr-15) from Caenorhabditis elegans.